The chain runs to 541 residues: uncharacterized protein (541 aa).

A run of 6 helical transmembrane segments spans residues 57 to 77 (LVVT…TIAI), 90 to 110 (LTFG…SYAL), 144 to 164 (VGHL…YGLI), 167 to 187 (AFIP…ATAT), 221 to 241 (MVVW…MAMF), and 257 to 277 (VLII…ILAW). The HAMP domain maps to 278–329 (LTATPVRVVRAALRRVERGELRTNLVVFDGTELGELQRGFNAMVAGLRERER). Residues 361–485 (AVVFIDIVGS…EPVNEAARLC (125 aa)) enclose the Guanylate cyclase domain.

Belongs to the adenylyl cyclase class-3 family.

It is found in the cell membrane. This is an uncharacterized protein from Mycobacterium tuberculosis (strain CDC 1551 / Oshkosh).